The primary structure comprises 176 residues: Membrane glycoprotein UL144 (176 aa).

The signal sequence occupies residues 1-20 (MKPLVMLICFGVILLQLGVT). A TNFR-Cys repeat occupies 58-95 (PCPNGTYVSGLYNCTDCTQCNVTQVMIRNCTSTNNTVC). 3 disulfide bridges follow: Cys-59–Cys-71, Cys-74–Cys-87, and Cys-77–Cys-95. The helical transmembrane segment at 134-154 (LAWLSLFIFLVGIILLILYLI) threads the bilayer.

As to quaternary structure, interacts with host TRIM23; this interaction causes auto-ubiquitination of TRAF6, leading to NF-kappaB activation.

The protein localises to the membrane. Activates NF-kappa-B in a tumor necrosis factor receptor (TNFR)-associated factor 6 (TRAF6)-dependent manner, causing the up-regulation of the chemokine CCL22. This is Membrane glycoprotein UL144 (UL144) from Human cytomegalovirus (strain Merlin) (HHV-5).